The chain runs to 242 residues: MTFDIFPAVDLRGGRCVQLVQGVPGSEVVSLDDPLVQAVRWADMGADHLHIIDLDGAIEGTRLNAPILRRIVGELEVFVQVGGGIRSRSDVAEVLDTGVDRVILGTMALRDPPVVKELAEEYGPDRIMVALDVRDGRVTSEGWQRTLEFDAIELGIVFESFGAGSILFTNIDTEGQQRGVDPEPTRELVEAVSIPVIAAGGVSSLDDIKLLSDAGAAGAVIGTAIYTGTLNLREALELAKTL.

Asp-10 (proton acceptor) is an active-site residue. Asp-132 acts as the Proton donor in catalysis.

It belongs to the HisA/HisF family.

Its subcellular location is the cytoplasm. It carries out the reaction 1-(5-phospho-beta-D-ribosyl)-5-[(5-phospho-beta-D-ribosylamino)methylideneamino]imidazole-4-carboxamide = 5-[(5-phospho-1-deoxy-D-ribulos-1-ylimino)methylamino]-1-(5-phospho-beta-D-ribosyl)imidazole-4-carboxamide. Its pathway is amino-acid biosynthesis; L-histidine biosynthesis; L-histidine from 5-phospho-alpha-D-ribose 1-diphosphate: step 4/9. In Methanothrix thermoacetophila (strain DSM 6194 / JCM 14653 / NBRC 101360 / PT) (Methanosaeta thermophila), this protein is 1-(5-phosphoribosyl)-5-[(5-phosphoribosylamino)methylideneamino] imidazole-4-carboxamide isomerase.